We begin with the raw amino-acid sequence, 399 residues long: Succinate--CoA ligase [ADP-forming] subunit beta (399 aa).

The 246-residue stretch at 9–254 (KAVLAEFGAP…ESEEDPKEIE (246 aa)) folds into the ATP-grasp domain. Residues Lys46, 53–55 (GRG), Glu109, Ala112, and Glu117 contribute to the ATP site. Asn209 and Asp223 together coordinate Mg(2+). Substrate-binding positions include Asn274 and 331-333 (GIM).

It belongs to the succinate/malate CoA ligase beta subunit family. In terms of assembly, heterotetramer of two alpha and two beta subunits. Requires Mg(2+) as cofactor.

It carries out the reaction succinate + ATP + CoA = succinyl-CoA + ADP + phosphate. The enzyme catalyses GTP + succinate + CoA = succinyl-CoA + GDP + phosphate. Its pathway is carbohydrate metabolism; tricarboxylic acid cycle; succinate from succinyl-CoA (ligase route): step 1/1. Functionally, succinyl-CoA synthetase functions in the citric acid cycle (TCA), coupling the hydrolysis of succinyl-CoA to the synthesis of either ATP or GTP and thus represents the only step of substrate-level phosphorylation in the TCA. The beta subunit provides nucleotide specificity of the enzyme and binds the substrate succinate, while the binding sites for coenzyme A and phosphate are found in the alpha subunit. The sequence is that of Succinate--CoA ligase [ADP-forming] subunit beta from Caulobacter sp. (strain K31).